A 227-amino-acid polypeptide reads, in one-letter code: PKHD-type hydroxylase Bphyt_7102 (227 aa).

Positions 80 to 179 constitute a Fe2OG dioxygenase domain; that stretch reads QVYPPLFNRY…RIASFFWVQS (100 aa). Fe cation is bound by residues histidine 98, aspartate 100, and histidine 160. Residue arginine 170 coordinates 2-oxoglutarate.

The cofactor is Fe(2+). L-ascorbate serves as cofactor.

The polypeptide is PKHD-type hydroxylase Bphyt_7102 (Paraburkholderia phytofirmans (strain DSM 17436 / LMG 22146 / PsJN) (Burkholderia phytofirmans)).